Here is a 264-residue protein sequence, read N- to C-terminus: 3-methyl-2-oxobutanoate hydroxymethyltransferase (264 aa).

Mg(2+)-binding residues include Asp45 and Asp84. 3-methyl-2-oxobutanoate-binding positions include 45–46 (DS), Asp84, and Lys112. Glu114 serves as a coordination point for Mg(2+). The active-site Proton acceptor is the Glu181.

This sequence belongs to the PanB family. Homodecamer; pentamer of dimers. Mg(2+) serves as cofactor.

The protein localises to the cytoplasm. It catalyses the reaction 3-methyl-2-oxobutanoate + (6R)-5,10-methylene-5,6,7,8-tetrahydrofolate + H2O = 2-dehydropantoate + (6S)-5,6,7,8-tetrahydrofolate. It participates in cofactor biosynthesis; (R)-pantothenate biosynthesis; (R)-pantoate from 3-methyl-2-oxobutanoate: step 1/2. In terms of biological role, catalyzes the reversible reaction in which hydroxymethyl group from 5,10-methylenetetrahydrofolate is transferred onto alpha-ketoisovalerate to form ketopantoate. This chain is 3-methyl-2-oxobutanoate hydroxymethyltransferase, found in Escherichia coli (strain 55989 / EAEC).